The sequence spans 436 residues: Glutamyl-tRNA reductase (436 aa).

Substrate contacts are provided by residues 49-52, serine 118, 123-125, and glutamine 129; these read TCNR and EPQ. Cysteine 50 acts as the Nucleophile in catalysis. NADP(+) is bound at residue 203–208; sequence GAGETI.

Belongs to the glutamyl-tRNA reductase family. In terms of assembly, homodimer.

The catalysed reaction is (S)-4-amino-5-oxopentanoate + tRNA(Glu) + NADP(+) = L-glutamyl-tRNA(Glu) + NADPH + H(+). It functions in the pathway porphyrin-containing compound metabolism; protoporphyrin-IX biosynthesis; 5-aminolevulinate from L-glutamyl-tRNA(Glu): step 1/2. Functionally, catalyzes the NADPH-dependent reduction of glutamyl-tRNA(Glu) to glutamate 1-semialdehyde (GSA). The sequence is that of Glutamyl-tRNA reductase from Actinobacillus pleuropneumoniae serotype 7 (strain AP76).